A 574-amino-acid polypeptide reads, in one-letter code: MALHQFDYIFAIAMLFAFLDAFNIGANDVANSFASSISSRSLKYWQAMVLAGLCEFLGAVLAGARVSGTIKNNIIDSSIFTNDPAVLMLTMTSALIGSSCWLTFATAIGMPVSTTHSIVGGTIGAGIAAGGANGVVWGWSGVSQIIASWFIAPILAGAIAAIVFSISRFSVLEVKSLERSIKNALLLVGVLVFATFSILTMLIVWKGSPNLHLDDLSETETAVSIVLTGAIASIVYFIFFYPFYRRKVLDQDWTLKLIDIFRGPSFYFKSTDDIPPMPEGHQLTIDYYEGRRNLGTTVSVEDEENKAASNSNDSVKNKEDIQEVDLVRTETEPETKLSTKQYWWSLLKQGPKKWPLLFWLVISHGWTQDVIHAQVNDRDMLSGDLKGMYERSKFYDNRVEYIYSVLQAITAATMSFAHGANDVANATGPLSAVYVIWKTNTIGAKSEVPVWVLAYGGVALVIGCWTYGYNIIKNLGNKMILQSPSRGFSIELAVAITTVMATQLGIPTSTTQIAVGGIVAVGLCNKDLKSVNWRMVAWCYSGWFLTLPIAGLIAGIINGIILNAPRFGVEYQMT.

Residues 1 to 5 are Extracellular-facing; the sequence is MALHQ. A helical membrane pass occupies residues 6 to 26; sequence FDYIFAIAMLFAFLDAFNIGA. Residues 27-43 lie on the Cytoplasmic side of the membrane; the sequence is NDVANSFASSISSRSLK. Residues 44–64 form a helical membrane-spanning segment; that stretch reads YWQAMVLAGLCEFLGAVLAGA. Residues 65 to 84 lie on the Extracellular side of the membrane; it reads RVSGTIKNNIIDSSIFTNDP. The helical transmembrane segment at 85–105 threads the bilayer; sequence AVLMLTMTSALIGSSCWLTFA. The Cytoplasmic segment spans residues 106-117; the sequence is TAIGMPVSTTHS. A helical transmembrane segment spans residues 118–138; it reads IVGGTIGAGIAAGGANGVVWG. Residues 139 to 145 lie on the Extracellular side of the membrane; sequence WSGVSQI. A helical membrane pass occupies residues 146 to 166; sequence IASWFIAPILAGAIAAIVFSI. The Cytoplasmic portion of the chain corresponds to 167–184; that stretch reads SRFSVLEVKSLERSIKNA. Residues 185–205 traverse the membrane as a helical segment; the sequence is LLLVGVLVFATFSILTMLIVW. At 206–222 the chain is on the extracellular side; it reads KGSPNLHLDDLSETETA. A helical transmembrane segment spans residues 223–243; sequence VSIVLTGAIASIVYFIFFYPF. Over 244 to 354 the chain is Cytoplasmic; it reads YRRKVLDQDW…SLLKQGPKKW (111 aa). The disordered stretch occupies residues 301 to 332; sequence EDEENKAASNSNDSVKNKEDIQEVDLVRTETE. Positions 315-332 are enriched in basic and acidic residues; that stretch reads VKNKEDIQEVDLVRTETE. The chain crosses the membrane as a helical span at residues 355 to 375; that stretch reads PLLFWLVISHGWTQDVIHAQV. Topologically, residues 376–398 are extracellular; that stretch reads NDRDMLSGDLKGMYERSKFYDNR. Residues 399 to 419 form a helical membrane-spanning segment; that stretch reads VEYIYSVLQAITAATMSFAHG. Topologically, residues 420–447 are cytoplasmic; sequence ANDVANATGPLSAVYVIWKTNTIGAKSE. A helical membrane pass occupies residues 448–468; sequence VPVWVLAYGGVALVIGCWTYG. Residues 469–503 lie on the Extracellular side of the membrane; it reads YNIIKNLGNKMILQSPSRGFSIELAVAITTVMATQ. A helical membrane pass occupies residues 504–524; sequence LGIPTSTTQIAVGGIVAVGLC. Topologically, residues 525-541 are cytoplasmic; that stretch reads NKDLKSVNWRMVAWCYS. The chain crosses the membrane as a helical span at residues 542–562; that stretch reads GWFLTLPIAGLIAGIINGIIL. Topologically, residues 563 to 574 are extracellular; the sequence is NAPRFGVEYQMT.

This sequence belongs to the inorganic phosphate transporter (PiT) (TC 2.A.20) family. In terms of assembly, forms homodimers and higher order homooligomers.

It is found in the cell membrane. It catalyses the reaction 2 Na(+)(out) + phosphate(out) = 2 Na(+)(in) + phosphate(in). With respect to regulation, weakly stimulated by Li(+) and K(+). Inhibited by monensin. Inhibited by phosphonoacetic acid. Inhibited by methylphosphonate. Inhibited by dimethylphosphonate. In terms of biological role, sodium-phosphate symporter. Active in early growth phase. The protein is Phosphate permease PHO89 (PHO89) of Saccharomyces cerevisiae (strain ATCC 204508 / S288c) (Baker's yeast).